Reading from the N-terminus, the 399-residue chain is F-box protein At1g30790 (399 aa).

The F-box domain occupies 3–49 (RQEIDHIPFDLTVEILTRLPAKSLMKFKCVSKLWSSIIHNQSFIDSF).

This Arabidopsis thaliana (Mouse-ear cress) protein is F-box protein At1g30790.